The chain runs to 711 residues: Ferric/cupric reductase transmembrane component 2 (711 aa).

Residues 1 to 23 (MHWTSILSAILLFCLSGARASPA) form the signal peptide. Over 24 to 164 (KTVIRNKVPL…GFYANLDVGN (141 aa)) the chain is Extracellular. N-linked (GlcNAc...) asparagine glycosylation is found at asparagine 85, asparagine 108, asparagine 120, and asparagine 134. The helical transmembrane segment at 165 to 185 (IYGGIICAYFVAIMAFAGVLH) threads the bilayer. At 186-235 (CMNYTPFKTVLLKQKLVGYVRGYLTLPTIGSKHASDFSYFRIFTGYLPTR) the chain is on the cytoplasmic side. The helical transmembrane segment at 236 to 256 (LEGIIILGYLVLHTVFLAYGY) threads the bilayer. At 257–280 (EYDPENIIFKSRRVQVARYVADRS) the chain is on the extracellular side. The 135-residue stretch at 280–414 (SGVLAFAHFP…SGIEWIYTAI (135 aa)) folds into the Ferric oxidoreductase domain. Residues 281 to 301 (GVLAFAHFPLIVLFAGRNNFL) traverse the membrane as a helical segment. The Cytoplasmic segment spans residues 302–317 (EYISGVKYTSFIMFHK). The heme site is built by histidine 316 and histidine 330. A helical membrane pass occupies residues 318–340 (WLGRMMFLDAMIHGSAYTSYTVA). An N-linked (GlcNAc...) asparagine glycan is attached at asparagine 341. Over 341–353 (NKTWATSKNRLYW) the chain is Extracellular. The chain crosses the membrane as a helical span at residues 354-374 (QFGVAALCLAGTMVFFSFAVF). The Cytoplasmic portion of the chain corresponds to 375 to 377 (RKY). Residues 378 to 398 (FYEAFLFLHIVLGAMFFYACW) form a helical membrane-spanning segment. Histidine 386 and histidine 400 together coordinate heme. The Extracellular segment spans residues 399-400 (EH). The helical transmembrane segment at 401–423 (VVSLSGIEWIYTAIAIWIVDRII) threads the bilayer. An FAD-binding FR-type domain is found at 415 to 534 (AIWIVDRIIR…EGPYGSSSPV (120 aa)). Residues 424–711 (RIIKASYFGF…IEYFEEYQCW (288 aa)) lie on the Cytoplasmic side of the membrane. 479–485 (HPFTVLD) contributes to the FAD binding site. NADP(+) contacts are provided by residues 526-529 (GPYG) and 677-678 (CG).

Belongs to the ferric reductase (FRE) family. It depends on FAD as a cofactor. Heme serves as cofactor.

It localises to the cell membrane. The enzyme catalyses 2 a Fe(II)-siderophore + NADP(+) + H(+) = 2 a Fe(III)-siderophore + NADPH. In terms of biological role, metalloreductase responsible for reducing extracellular iron and copper prior to import. Catalyzes the reductive uptake of Fe(3+)-salts and Fe(3+) bound to catecholate or hydroxamate siderophores. Fe(3+) is reduced to Fe(2+), which then dissociates from the siderophore and can be imported by the high-affinity Fe(2+) transport complex in the plasma membrane. Also participates in Cu(2+) reduction and Cu(+) uptake. The protein is Ferric/cupric reductase transmembrane component 2 (FRE2) of Saccharomyces cerevisiae (strain ATCC 204508 / S288c) (Baker's yeast).